Consider the following 830-residue polypeptide: Periplasmic nitrate reductase (830 aa).

Positions 1-30 form a signal peptide, tat-type signal; the sequence is MTTRREFIKRSAAVTAACTAGISLSGEASN. The 57-residue stretch at 40 to 96 folds into the 4Fe-4S Mo/W bis-MGD-type domain; it reads LKWSKAPCRFCGTGCSVNVAVKDNQVVATHGDIQSEVNRGLNCVKGYFLSKIMYGKD. Residues Cys-47, Cys-50, Cys-54, and Cys-82 each coordinate [4Fe-4S] cluster. Mo-bis(molybdopterin guanine dinucleotide)-binding positions include Lys-84, Gln-151, Asn-176, Cys-180, 213 to 220, 244 to 248, Met-374, Gln-378, Asn-484, 510 to 511, Lys-533, Asp-560, and 720 to 729; these read WGSNMAEM, STFQH, SE, and TGRVLEHWHS. Trp-796 is a binding site for substrate. Positions 804 and 821 each coordinate Mo-bis(molybdopterin guanine dinucleotide).

The protein belongs to the prokaryotic molybdopterin-containing oxidoreductase family. NasA/NapA/NarB subfamily. As to quaternary structure, component of the periplasmic nitrate reductase NapAB complex composed of NapA and NapB. [4Fe-4S] cluster is required as a cofactor. The cofactor is Mo-bis(molybdopterin guanine dinucleotide). Post-translationally, predicted to be exported by the Tat system. The position of the signal peptide cleavage has not been experimentally proven.

It localises to the periplasm. The enzyme catalyses 2 Fe(II)-[cytochrome] + nitrate + 2 H(+) = 2 Fe(III)-[cytochrome] + nitrite + H2O. Catalytic subunit of the periplasmic nitrate reductase complex NapAB. Receives electrons from NapB and catalyzes the reduction of nitrate to nitrite. The chain is Periplasmic nitrate reductase from Hahella chejuensis (strain KCTC 2396).